Consider the following 159-residue polypeptide: Transcriptional repressor NrdR (159 aa).

A zinc finger spans residues 3 to 34; it reads CPFCRHEDTQVVDSRVSEDGAAIRRRRRCSAC. In terms of domain architecture, ATP-cone spans 49-139; that stretch reads PAVVKKDGSR…VYRRFEDVSE (91 aa).

The protein belongs to the NrdR family. The cofactor is Zn(2+).

Negatively regulates transcription of bacterial ribonucleotide reductase nrd genes and operons by binding to NrdR-boxes. In Burkholderia multivorans (strain ATCC 17616 / 249), this protein is Transcriptional repressor NrdR.